Reading from the N-terminus, the 154-residue chain is Large ribosomal subunit protein bL19 (154 aa).

The interval 1-33 (MAADPKDTTVTDENTETAATAEVETVASAPTSP) is disordered. The segment covering 16-27 (ETAATAEVETVA) has biased composition (low complexity).

The protein belongs to the bacterial ribosomal protein bL19 family.

This protein is located at the 30S-50S ribosomal subunit interface and may play a role in the structure and function of the aminoacyl-tRNA binding site. The polypeptide is Large ribosomal subunit protein bL19 (Parasynechococcus marenigrum (strain WH8102)).